Here is a 161-residue protein sequence, read N- to C-terminus: Nascent polypeptide-associated complex subunit beta (161 aa).

Disordered regions lie at residues 14 to 41 (LSAN…KDDS) and 125 to 161 (QNAQ…ADVE). Residues 37–102 (NKDDSKLQAQ…PQEKSLQDLF (66 aa)) enclose the NAC-A/B domain. The segment covering 125–134 (QNAQAAAPAT) has biased composition (low complexity). Over residues 135 to 146 (EGHEAGEKKDND) the composition is skewed to basic and acidic residues.

This sequence belongs to the NAC-beta family. In terms of assembly, part of the nascent polypeptide-associated complex (NAC), consisting of EGD2 and EGD1. NAC associates with ribosomes via EGD1.

Its subcellular location is the cytoplasm. It is found in the nucleus. Functionally, component of the nascent polypeptide-associated complex (NAC), a dynamic component of the ribosomal exit tunnel, protecting the emerging polypeptides from interaction with other cytoplasmic proteins to ensure appropriate nascent protein targeting. The NAC complex also promotes mitochondrial protein import by enhancing productive ribosome interactions with the outer mitochondrial membrane and blocks the inappropriate interaction of ribosomes translating non-secretory nascent polypeptides with translocation sites in the membrane of the endoplasmic reticulum. EGD1 may act as a transcription factor that exert a negative effect on the expression of several genes that are transcribed by RNA polymerase II. The protein is Nascent polypeptide-associated complex subunit beta (EGD1) of Eremothecium gossypii (strain ATCC 10895 / CBS 109.51 / FGSC 9923 / NRRL Y-1056) (Yeast).